Reading from the N-terminus, the 350-residue chain is Non-structural protein 2 (350 aa).

This sequence belongs to the aquareoviridae NS2 protein family. As to quaternary structure, homomultimer.

Functionally, protein that binds to ssRNA and may be involved in genome packaging. In Ctenopharyngodon idella (Grass carp), this protein is Non-structural protein 2 (S9).